The sequence spans 351 residues: Peptide chain release factor 1 (351 aa).

Q229 carries the N5-methylglutamine modification.

It belongs to the prokaryotic/mitochondrial release factor family. In terms of processing, methylated by PrmC. Methylation increases the termination efficiency of RF1.

The protein resides in the cytoplasm. In terms of biological role, peptide chain release factor 1 directs the termination of translation in response to the peptide chain termination codons UAG and UAA. The protein is Peptide chain release factor 1 of Cereibacter sphaeroides (strain KD131 / KCTC 12085) (Rhodobacter sphaeroides).